The chain runs to 176 residues: ATP-dependent protease subunit HslV (176 aa).

Residue Thr2 is part of the active site. Gly157, Cys160, and Thr163 together coordinate Na(+).

This sequence belongs to the peptidase T1B family. HslV subfamily. In terms of assembly, a double ring-shaped homohexamer of HslV is capped on each side by a ring-shaped HslU homohexamer. The assembly of the HslU/HslV complex is dependent on binding of ATP.

The protein localises to the cytoplasm. The catalysed reaction is ATP-dependent cleavage of peptide bonds with broad specificity.. Allosterically activated by HslU binding. In terms of biological role, protease subunit of a proteasome-like degradation complex believed to be a general protein degrading machinery. This chain is ATP-dependent protease subunit HslV, found in Salmonella agona (strain SL483).